A 567-amino-acid chain; its full sequence is D-lactate dehydrogenase [cytochrome], mitochondrial (567 aa).

The transit peptide at 1-56 (MAFASKFARSKTILSFLRPCRQLHSTPKSTGDVTVLSPVKGRRRLPTCWSSSLFPL) directs the protein to the mitochondrion. Positions 142–319 (AVNIPDVVVF…TEITLRLQKI (178 aa)) constitute an FAD-binding PCMH-type domain.

Belongs to the FAD-binding oxidoreductase/transferase type 4 family. In terms of assembly, homodimer. FAD is required as a cofactor. In terms of tissue distribution, expressed in leaves, stems, flowers and roots.

The protein localises to the mitochondrion. The enzyme catalyses (R)-lactate + 2 Fe(III)-[cytochrome c] = 2 Fe(II)-[cytochrome c] + pyruvate + 2 H(+). With respect to regulation, inhibited by cyanide ions. Catalyzes the stereospecific oxidation of D-lactate to pyruvate. Involved in the detoxification of methylglyoxal and D-lactate, but probably not involved in the metabolization of glycolate. In Arabidopsis thaliana (Mouse-ear cress), this protein is D-lactate dehydrogenase [cytochrome], mitochondrial.